A 679-amino-acid chain; its full sequence is Methyl-accepting chemotaxis protein McpB (679 aa).

3 divergent domain HAMP regions span residues 8–56 (AVAQ…RQLR), 63–112 (QQVE…AAHI), and 111–156 (HIAV…ERLR). The PAS domain maps to 171–213 (YNARIKSALDNVSANVMIADNDLNIIYMNRTVSEMLGRAEADI). A heme-binding site is contributed by H234. A DxT. Important for signal propagation motif is present at residues 285–287 (DRT). A divergent domain HAMP 4 region spans residues 289 to 332 (EHRAEQEVSQLVQAAAAGDFSKRVEEAGKEGFFLRLAKDLNSLV). One can recognise an HAMP 5 domain in the interval 333–385 (DTADRGLRDVSRMLGALAQGDLTQRIEADYQGTFGQLKDFSNDTAQSLSRMLG). The 230-residue stretch at 390-619 (AADTINTAAS…EAAAAAEAMQ (230 aa)) folds into the Methyl-accepting transducer domain. Disordered regions lie at residues 405–425 (NAEL…TASS) and 644–679 (ASAR…WEEF). The segment covering 411 to 425 (RTEQQASSLEETASS) has biased composition (polar residues). Over residues 670-679 (ARKEDGWEEF) the composition is skewed to basic and acidic residues. The GWEEF pentapeptide. Important for methylation by CheR2 signature appears at 675-679 (GWEEF).

Belongs to the methyl-accepting chemotaxis (MCP) protein family. In terms of assembly, homodimer. The PAS domains form dimers in the presence and absence of oxygen. Interacts with the methyltransferase CheR2 via the C-terminal McpB pentapeptide GWEEF. Interacts with the methylesterase/gutaminase CheB2, which also binds to the GWEEF pentapeptide. Post-translationally, methylated by CheR2, but not by CheR1, CheR3 or WspC. Demethylated by CheB2. In vitro, can be methylated by E.coli CheR.

The protein localises to the cytoplasm. In terms of biological role, chemoreceptor that plays a critical role in the virulence and pathogenesis of P.aeruginosa in a variety of hosts. Probably acts through oxygen sensing. Uses a heme-based sensor. Could be involved in chemotaxis. When expressed in E.coli, is able to sense and mediate repellent responses to oxygen, carbon monoxide and nitric oxide. The polypeptide is Methyl-accepting chemotaxis protein McpB (Pseudomonas aeruginosa (strain ATCC 15692 / DSM 22644 / CIP 104116 / JCM 14847 / LMG 12228 / 1C / PRS 101 / PAO1)).